Here is a 350-residue protein sequence, read N- to C-terminus: Histidinol-phosphate aminotransferase 1 (350 aa).

At Lys-211 the chain carries N6-(pyridoxal phosphate)lysine.

Belongs to the class-II pyridoxal-phosphate-dependent aminotransferase family. Histidinol-phosphate aminotransferase subfamily. As to quaternary structure, homodimer. The cofactor is pyridoxal 5'-phosphate.

It catalyses the reaction L-histidinol phosphate + 2-oxoglutarate = 3-(imidazol-4-yl)-2-oxopropyl phosphate + L-glutamate. It participates in amino-acid biosynthesis; L-histidine biosynthesis; L-histidine from 5-phospho-alpha-D-ribose 1-diphosphate: step 7/9. In Trichormus variabilis (strain ATCC 29413 / PCC 7937) (Anabaena variabilis), this protein is Histidinol-phosphate aminotransferase 1.